A 250-amino-acid polypeptide reads, in one-letter code: NAD-dependent protein deacylase (250 aa).

One can recognise a Deacetylase sirtuin-type domain in the interval Met1–Ile248. Gly20–Trp39 serves as a coordination point for NAD(+). 2 residues coordinate substrate: Tyr64 and Arg67. Residue Gln98 to Asp101 coordinates NAD(+). Residue His116 is the Proton acceptor of the active site. Zn(2+)-binding residues include Cys124, Cys127, Cys150, and Cys153. NAD(+) contacts are provided by residues Gly190–Ser192, Asn216–Glu218, and Ala234.

Belongs to the sirtuin family. Class III subfamily. The cofactor is Zn(2+).

The protein localises to the cytoplasm. It catalyses the reaction N(6)-acetyl-L-lysyl-[protein] + NAD(+) + H2O = 2''-O-acetyl-ADP-D-ribose + nicotinamide + L-lysyl-[protein]. It carries out the reaction N(6)-succinyl-L-lysyl-[protein] + NAD(+) + H2O = 2''-O-succinyl-ADP-D-ribose + nicotinamide + L-lysyl-[protein]. NAD-dependent lysine deacetylase and desuccinylase that specifically removes acetyl and succinyl groups on target proteins. Modulates the activities of several proteins which are inactive in their acylated form. Deacetylates the N-terminal lysine residue of Alba, the major archaeal chromatin protein and that, in turn, increases Alba's DNA binding affinity, thereby repressing transcription. This is NAD-dependent protein deacylase from Pyrococcus furiosus (strain ATCC 43587 / DSM 3638 / JCM 8422 / Vc1).